A 274-amino-acid polypeptide reads, in one-letter code: tRNA (guanine-N(1)-)-methyltransferase (274 aa).

Residues glycine 116 and 140–145 contribute to the S-adenosyl-L-methionine site; that span reads LGDYVL.

This sequence belongs to the RNA methyltransferase TrmD family. In terms of assembly, homodimer.

It is found in the cytoplasm. It catalyses the reaction guanosine(37) in tRNA + S-adenosyl-L-methionine = N(1)-methylguanosine(37) in tRNA + S-adenosyl-L-homocysteine + H(+). Specifically methylates guanosine-37 in various tRNAs. The sequence is that of tRNA (guanine-N(1)-)-methyltransferase from Arthrobacter sp. (strain FB24).